Reading from the N-terminus, the 249-residue chain is Triosephosphate isomerase (249 aa).

11 to 13 (NWK) provides a ligand contact to substrate. The Electrophile role is filled by histidine 91. The active-site Proton acceptor is the glutamate 163. Residues glycine 169, serine 208, and 229–230 (GG) each bind substrate.

This sequence belongs to the triosephosphate isomerase family. Homodimer.

The protein localises to the cytoplasm. It carries out the reaction D-glyceraldehyde 3-phosphate = dihydroxyacetone phosphate. The protein operates within carbohydrate biosynthesis; gluconeogenesis. It functions in the pathway carbohydrate degradation; glycolysis; D-glyceraldehyde 3-phosphate from glycerone phosphate: step 1/1. Its function is as follows. Involved in the gluconeogenesis. Catalyzes stereospecifically the conversion of dihydroxyacetone phosphate (DHAP) to D-glyceraldehyde-3-phosphate (G3P). In Pseudoalteromonas translucida (strain TAC 125), this protein is Triosephosphate isomerase.